A 58-amino-acid polypeptide reads, in one-letter code: Mesomartoxin (58 aa).

The signal sequence occupies residues 1–29 (MMSRLSVFILIALVLSVIIDVLNNSKVEG). 3 disulfide bridges follow: cysteine 31–cysteine 49, cysteine 35–cysteine 54, and cysteine 39–cysteine 56.

The protein belongs to the short scorpion toxin superfamily. Potassium channel inhibitor family. Alpha-KTx 26 subfamily. Expressed by the venom gland.

It localises to the secreted. Recombinant toxin that reversibly blocks the voltage-gated potassium channels Shaker (IC(50)=0.054 nM), rKv1.2/KCNA2 (IC(50)=15.6 nM), and rKv1.3/KCNA3 (IC(50)=12.5 uM). The protein is Mesomartoxin of Olivierus martensii (Manchurian scorpion).